We begin with the raw amino-acid sequence, 134 residues long: uncharacterized protein (134 aa).

The N-terminal stretch at 1–23 is a signal peptide; the sequence is MWHLRCSNWRGSGVFGMCFSLSG. Cys24 carries the N-palmitoyl cysteine lipid modification. A lipid anchor (S-diacylglycerol cysteine) is attached at Cys24.

Its subcellular location is the cell membrane. This is an uncharacterized protein from Treponema pallidum (strain Nichols).